Reading from the N-terminus, the 489-residue chain is Protein SOF1 (489 aa).

WD repeat units follow at residues 65 to 105 (GHRD…EFVS), 113 to 158 (VTGL…YSNK), 177 to 214 (DGES…PVSD), 217 to 257 (WGAD…PTQK), 259 to 299 (VQTM…RSLN), 303 to 342 (DHVS…SREI), and 346 to 385 (KRMQ…RSNV). 2 stretches are compositionally biased toward basic and acidic residues: residues 440 to 459 (REAN…ERKK) and 466 to 489 (HKYE…TQEK). Residues 440–489 (REANERRTRKDMPYISERKKQIVGTVHKYEDSGRDRKRRKEDDKRDTQEK) form a disordered region.

It belongs to the WD repeat DCAF13/WDSOF1 family. In terms of assembly, interacts with snoRNA U3. Interacts with NOP1 and MPP10. Component of the ribosomal small subunit (SSU) processome composed of at least 40 protein subunits and snoRNA U3.

The protein resides in the nucleus. It is found in the nucleolus. Required for ribosomal RNA processing. The chain is Protein SOF1 (SOF1) from Saccharomyces cerevisiae (strain ATCC 204508 / S288c) (Baker's yeast).